The chain runs to 646 residues: Preterminal protein (646 aa).

The Nuclear localization signal motif lies at 357–366; the sequence is RLPVRRRRRR. Ser-555 is modified (O-(5'-phospho-DNA)-serine). Positions 619–646 are disordered; it reads LHADVPLPPLQANPHPPLPPDARPQRTM. Residues 624-640 are compositionally biased toward pro residues; it reads PLPPLQANPHPPLPPDA.

Belongs to the adenoviridae terminal protein family. As to quaternary structure, heterodimer with the polymerase; this heterodimer binds to bp 9 to 18 of the genome. Interacts with host POU2F1; POU2F1 binds to the auxiliary sequences in the inverted terminal repeats and tethers the pTP-POL heterodimer to the origin DNA thereby participating in the assembly of the pre-initiation complex (POL-TP-DBP-NFIA-POU2F1). Preterminal protein is used to replicate viral genome, upon genomic encapsidation it is processed first into iTP and finally into TP by adenovirus protease.

Its subcellular location is the host nucleus matrix. Functionally, protein covalently bound to the viral DNA that acts as a primer for viral genomic replication by DNA strand displacement. Assembles on the viral origin of replication in an initiation complex with viral polymerase, DBP, host NFIA and host POU2F1/OCT1. During initiation, the polymerase covalently couples the first dCTP with Ser-580 of pTP. The terminal protein stimulates the template activity over 20 fold compared to protein-free templates. Neo-synthesized viral genomes are linked to two preterminal proteins, one for each 5' end. These new genomes are encapsidated in the nucleus, and during capsid maturation by viral protease, preterminal protein is first cleaved into intermediary (iTP), then into mature TP. May play a role in host nuclear matrix localization of genomic DNA. The sequence is that of Preterminal protein from Homo sapiens (Human).